Consider the following 364-residue polypeptide: GDSL esterase/lipase EXL3 (364 aa).

An N-terminal signal peptide occupies residues 1 to 32 (MKDNSSWSCSCSWSSWKICLLSVLFLTETITA). The active-site Nucleophile is S50. Residues D339 and H342 contribute to the active site.

It belongs to the 'GDSL' lipolytic enzyme family. As to expression, flower buds.

Its subcellular location is the secreted. The polypeptide is GDSL esterase/lipase EXL3 (EXL3) (Arabidopsis thaliana (Mouse-ear cress)).